Here is a 484-residue protein sequence, read N- to C-terminus: Acid alpha-amylase (484 aa).

A glycan (N-linked (GlcNAc...) asparagine) is linked at Asn-24. Cys-30 and Cys-38 are joined by a disulfide. Position 83 (Trp-83) interacts with substrate. Residue Asp-121 coordinates Ca(2+). His-122 contributes to the substrate binding site. An intrachain disulfide couples Cys-150 to Cys-164. Asn-157 carries an N-linked (GlcNAc...) asparagine glycan. Positions 162 and 175 each coordinate Ca(2+). N-linked (GlcNAc...) asparagine glycosylation is present at Asn-197. A substrate-binding site is contributed by Arg-204. Asp-206, Glu-210, and Glu-230 together coordinate Ca(2+). The active-site Nucleophile is Asp-206. Residue 209–210 (LE) participates in substrate binding. Glu-230 acts as the Proton donor in catalysis. Gly-234 lines the substrate pocket. A disulfide bridge links Cys-240 with Cys-283. Substrate is bound by residues Asp-297 and Arg-344. Cys-440 and Cys-475 form a disulfide bridge.

The protein belongs to the glycosyl hydrolase 13 family. In terms of assembly, monomer. Requires Ca(2+) as cofactor.

Its subcellular location is the secreted. The enzyme catalyses Endohydrolysis of (1-&gt;4)-alpha-D-glucosidic linkages in polysaccharides containing three or more (1-&gt;4)-alpha-linked D-glucose units.. The polypeptide is Acid alpha-amylase (Aspergillus niger).